A 435-amino-acid chain; its full sequence is tRNA modification GTPase MnmE (435 aa).

3 residues coordinate (6S)-5-formyl-5,6,7,8-tetrahydrofolate: arginine 20, glutamate 77, and lysine 117. The 146-residue stretch at 214-359 folds into the TrmE-type G domain; that stretch reads GFKIVIVGAP…FMKELESFCL (146 aa). GTP is bound by residues 224 to 229, 243 to 249, and 268 to 271; these read NSGKSS, TEEAGTT, and DTAG. Serine 228 and threonine 249 together coordinate Mg(2+). Lysine 435 is a (6S)-5-formyl-5,6,7,8-tetrahydrofolate binding site.

This sequence belongs to the TRAFAC class TrmE-Era-EngA-EngB-Septin-like GTPase superfamily. TrmE GTPase family. As to quaternary structure, homodimer. Heterotetramer of two MnmE and two MnmG subunits. K(+) serves as cofactor.

The protein localises to the cytoplasm. In terms of biological role, exhibits a very high intrinsic GTPase hydrolysis rate. Involved in the addition of a carboxymethylaminomethyl (cmnm) group at the wobble position (U34) of certain tRNAs, forming tRNA-cmnm(5)s(2)U34. This is tRNA modification GTPase MnmE from Bartonella henselae (strain ATCC 49882 / DSM 28221 / CCUG 30454 / Houston 1) (Rochalimaea henselae).